We begin with the raw amino-acid sequence, 3066 residues long: Serine-protein kinase ATM (3066 aa).

At serine 2 the chain carries N-acetylserine. Serine 367 carries the phosphoserine; by autocatalysis modification. Residues 829–862 form a disordered region; the sequence is LDHGVHPGEDDEDGGGCDSLMEAEGPSSTGLSTA. Positions 1380-1389 are interaction with ABL1; sequence DPAPNPPYFP. Serine 1899 carries the phosphoserine; by autocatalysis modification. Residues 1946 to 2576 enclose the FAT domain; the sequence is EVAKVAQSCS…LFIILALANA (631 aa). Positions 1973-1982 are enriched in basic and acidic residues; that stretch reads TDEQEKRSPT. 2 disordered regions span residues 1973 to 2000 and 2585 to 2607; these read TDEQ…EKSK and PETT…LDED. Over residues 1985–1996 the composition is skewed to polar residues; that stretch reads EGSQGTTISSLS. The residue at position 1987 (serine 1987) is a Phosphoserine; by autocatalysis. Over residues 2597-2607 the composition is skewed to basic and acidic residues; it reads TSKENSHLDED. The 314-residue stretch at 2696–3009 folds into the PI3K/PI4K catalytic domain; sequence FKTEFRLAGG…ECKQSLSDTD (314 aa). The segment at 2702–2708 is G-loop; the sequence is LAGGLNL. Positions 2877-2885 are catalytic loop; that stretch reads GLGDRHVQN. The tract at residues 2897 to 2921 is activation loop; it reads HIDLGVAFEQGKILPTPETVPFRLS. Residues 2986–3007 are disordered; sequence DESDLHSTPNADDQECKQSLSD. A compositionally biased stretch (polar residues) spans 2991–3007; sequence HSTPNADDQECKQSLSD. The residue at position 3006 (serine 3006) is a Phosphoserine. Lysine 3026 carries the post-translational modification N6-acetyllysine. In terms of domain architecture, FATC spans 3034–3066; it reads TVLSVGGQVNLLIQQAMDPKNLSRLFPGWKAWV. Residues 3056–3058 carry the Microbody targeting signal; atypical motif; that stretch reads SRL.

It belongs to the PI3/PI4-kinase family. ATM subfamily. Homodimer. Dimers or tetramers in inactive state. On DNA damage, autophosphorylation dissociates ATM into monomers rendering them catalytically active. Binds p53/TP53, ABL1, BRCA1 and TERF1. Interacts with NBN (via FxF/Y motif). Part of the BRCA1-associated genome surveillance complex (BASC), which contains BRCA1, MSH2, MSH6, MLH1, ATM, BLM, PMS2 and the RAD50-MRE11-NBN protein complex. This association could be a dynamic process changing throughout the cell cycle and within subnuclear domains. Interacts with RAD17; DNA damage promotes the association. Interacts with EEF1E1; the interaction, induced on DNA damage, up-regulates TP53. Interacts with KAT8, NABP2, ATMIN and CEP164. Interacts with AP2B1 and AP3B2; the interaction occurs in cytoplasmic vesicles. Interacts with TELO2 and TTI1. Interacts with DDX1. Interacts with BRAT1. Interacts with CYREN (via XLF motif). Interacts (via microbody targeting signal) with PEX5; promoting translocation to peroxisomes in response to reactive oxygen species (ROS). Phosphorylated by NUAK1/ARK5. Autophosphorylation on Ser-367, Ser-1899, Ser-1987 correlates with DNA damage-mediated activation of the kinase. Post-translationally, phosphorylated by NUAK1/ARK5. Autophosphorylation on Ser-367, Ser-1899, Ser-1987 correlates with DNA damage-mediated activation of the kinase. During the late stages of DNA damage response, dephosphorylated following deacetylation by SIRT7, leading to ATM deactivation. In terms of processing, acetylation, on DNA damage, is required for activation of the kinase activity, dimer-monomer transition, and subsequent autophosphorylation on Ser-1987. Acetylated in vitro by KAT5/TIP60. Deacetylated by SIRT7 during the late stages of DNA damage response, promoting ATM dephosphorylation and subsequent deactivation. As to expression, expressed in brain, skeletal muscle, testis, followed by spleen, lung, kidney, heart, liver and thymus. Ubiquitously expressed in embryonal tissues.

The protein localises to the nucleus. It is found in the cytoplasmic vesicle. It localises to the cytoplasm. The protein resides in the cytoskeleton. Its subcellular location is the microtubule organizing center. The protein localises to the centrosome. It is found in the peroxisome matrix. It carries out the reaction L-seryl-[protein] + ATP = O-phospho-L-seryl-[protein] + ADP + H(+). The enzyme catalyses L-threonyl-[protein] + ATP = O-phospho-L-threonyl-[protein] + ADP + H(+). With respect to regulation, activated by the MRN (MRE11-RAD50-NBS1) complex in response to DNA double strand breaks (DSBs), which recruits ATM to DSBs and promotes its activation. Inhibited by wortmannin. Its function is as follows. Serine/threonine protein kinase which activates checkpoint signaling upon double strand breaks (DSBs), apoptosis and genotoxic stresses such as ionizing ultraviolet A light (UVA), thereby acting as a DNA damage sensor. Recognizes the substrate consensus sequence [ST]-Q. Phosphorylates 'Ser-139' of histone variant H2AX at double strand breaks (DSBs), thereby regulating DNA damage response mechanism. Also plays a role in pre-B cell allelic exclusion, a process leading to expression of a single immunoglobulin heavy chain allele to enforce clonality and monospecific recognition by the B-cell antigen receptor (BCR) expressed on individual B-lymphocytes. After the introduction of DNA breaks by the RAG complex on one immunoglobulin allele, acts by mediating a repositioning of the second allele to pericentromeric heterochromatin, preventing accessibility to the RAG complex and recombination of the second allele. Also involved in signal transduction and cell cycle control. May function as a tumor suppressor. Necessary for activation of ABL1 and SAPK. Phosphorylates DYRK2, CHEK2, p53/TP53, FBXW7, FANCD2, NFKBIA, BRCA1, CREBBP/CBP, RBBP8/CTIP, FBXO46, MRE11, nibrin (NBN), RAD50, RAD17, PELI1, TERF1, UFL1, RAD9, UBQLN4 and DCLRE1C. May play a role in vesicle and/or protein transport. Could play a role in T-cell development, gonad and neurological function. Binds DNA ends. Plays a role in replication-dependent histone mRNA degradation. Phosphorylation of DYRK2 in nucleus in response to genotoxic stress prevents its MDM2-mediated ubiquitination and subsequent proteasome degradation. Phosphorylates ATF2 which stimulates its function in DNA damage response. Phosphorylates ERCC6 which is essential for its chromatin remodeling activity at DNA double-strand breaks. Phosphorylates TTC5/STRAP at 'Ser-203' in the cytoplasm in response to DNA damage, which promotes TTC5/STRAP nuclear localization. Also involved in pexophagy by mediating phosphorylation of PEX5: translocated to peroxisomes in response to reactive oxygen species (ROS), and catalyzes phosphorylation of PEX5, promoting PEX5 ubiquitination and induction of pexophagy. This Mus musculus (Mouse) protein is Serine-protein kinase ATM (Atm).